The sequence spans 151 residues: Probable cGMP 3',5'-cyclic phosphodiesterase subunit delta (151 aa).

It belongs to the PDE6D/unc-119 family. In terms of assembly, interacts with Pde6.

The protein localises to the nucleus. Its subcellular location is the cytoplasm. The polypeptide is Probable cGMP 3',5'-cyclic phosphodiesterase subunit delta (Drosophila grimshawi (Hawaiian fruit fly)).